The following is a 160-amino-acid chain: Eosinophil cationic protein (160 aa).

The signal sequence occupies residues 1 to 27 (MVPKLFTSQICLLLLLGLMGVEGSLHA). The required for nearly all of the bactericidal activity; partially involved in LPS-binding and bacterial membrane depolarization stretch occupies residues 28 to 72 (RPPQFTRAQWFAIQHISLNPPRCTIAMRAINNYRWRCKNQNTFLR). The active-site Proton acceptor is His42. 4 disulfides stabilise this stretch: Cys50/Cys110, Cys64/Cys123, Cys82/Cys138, and Cys89/Cys98. Tyr60 carries the 3'-nitrotyrosine modification. 65 to 69 (KNQNT) contacts substrate. N-linked (GlcNAc...) asparagine glycans are attached at residues Asn84, Asn92, and Asn119. His155 acts as the Proton donor in catalysis.

It belongs to the pancreatic ribonuclease family. As to quaternary structure, interacts with bacterial lipopolysaccharide (LPS) and lipoteichoic acid (LTA). In vitro interacts with and insert into lipid bilayers composed of dioleoyl phosphatidylcholine and dioleoyl phosphatidylglycerol. In vitro, tends to form amyloid-like aggregates at pH 3, but not at pH 5, nor 7.

It localises to the secreted. In terms of biological role, cytotoxin and helminthotoxin with low-efficiency ribonuclease activity. Possesses a wide variety of biological activities. Exhibits antibacterial activity, including cytoplasmic membrane depolarization of preferentially Gram-negative, but also Gram-positive strains. Promotes E.coli outer membrane detachment, alteration of the overall cell shape and partial loss of cell content. This Homo sapiens (Human) protein is Eosinophil cationic protein (RNASE3).